Reading from the N-terminus, the 313-residue chain is Non-structural protein 3 (313 aa).

Positions 1 to 149 (MLKMESTQQM…TRLMKEKIER (149 aa)) are RNA-binding. The interval 150-206 (GEVEVDDAFVEEKMEVDTIDWKSRYEQLEKRFESLKQRVNEKYNNWVIKARKDNENM) is dimerization. Residues 166–237 (DTIDWKSRYE…NKLERDLQSK (72 aa)) adopt a coiled-coil conformation. An interaction with host ZC3H7B region spans residues 170–234 (WKSRYEQLEK…IYNNKLERDL (65 aa)). Residues 208 to 313 (SLQNVISQQQ…QQSNYIYTYE (106 aa)) form an interaction with host EIF4G1 region.

This sequence belongs to the rotavirus NSP3 family. Homodimer. Interacts (via the coiled-coil region) with host ZC3H7B (via LD motif). Interacts with host EIF4G1.

The protein localises to the host cytoplasm. Functionally, plays an important role in stimulating the translation of viral mRNAs. These mRNAs are capped but not polyadenylated, instead terminating in a conserved sequence 'GACC' at the 3' that is recognized by NSP3, which competes with host PABPC1 for EIF4G1 binding. The interaction between NSP3 and host EIF4G1 stabilizes the EIF4E-EIF4G1 interaction, thereby facilitating the initiation of capped mRNA translation. The protein is Non-structural protein 3 of Rotavirus A (strain RVA/Human/Indonesia/69M/1980/G8P4[10]) (RV-A).